The following is a 660-amino-acid chain: MSAIESVLQERRVFQPSAEVAAQATVSGMDAYKALVAEAERDYEGFWGRLARETLSWNKPFTKVLDESNAPFYKWYDDGELNASYNSIDRHVEAGNGERVAIIFEADDGTITNVTYNDLLQRVSRFANALKQRGIKKGDRVVIYMPMSVEGIVAMQACARIGATHSVVFGGFSSKSLNERLVDVGAVALVTSDEQMRGGKALPLKNIADEALAMGGCEAVKSVIVYQRTGGKIGWDDKRDLWMHEITASESDHCPPEWVGAEHPLFILYTSGSTGKPKGVQHSTGGYLLWAAQTMKWTFDWKPTDVFWCTADIGWVTGHSYITYGPLTLGGTQVVFEGVPTYPNAGRFWDMIQKHKVTVFYTAPTAIRSLIKAAEADPKVHPKSYDLSTLRIIGTVGEPINPEAWVWYYENVGGSRCPIVDTWWQTETGGHMITPLPGATPLVPGSCTLPLPGIMAAVVDETGQDVPNGQGGILVVKRPWPSMIRTIWGDPERYKKSYFPEELGGTLYLAGDGSVRDKETGYFTIMGRIDDVLNVSGHRLGTMEIESALVANPLVAEAAVVGRPDDTTGEAVCAFVVLKRARPEGEEAAKIAADLRNWVGKEIGPIAKPKDIRFGDNLPKTRSGKIMRRLLRSLAKGEEITQDVSTLENPAILDQLGESR.

CoA contacts are provided by residues R197–K200 and T317. ATP contacts are provided by residues G397–P399, D421–T426, D512, and R528. S536 lines the CoA pocket. R539 provides a ligand contact to ATP. Positions 550 and 555 each coordinate Mg(2+). K625 bears the N6-acetyllysine mark.

The protein belongs to the ATP-dependent AMP-binding enzyme family. Mg(2+) serves as cofactor. Acetylated. Deacetylation by the SIR2-homolog deacetylase activates the enzyme.

The enzyme catalyses acetate + ATP + CoA = acetyl-CoA + AMP + diphosphate. Catalyzes the conversion of acetate into acetyl-CoA (AcCoA), an essential intermediate at the junction of anabolic and catabolic pathways. AcsA undergoes a two-step reaction. In the first half reaction, AcsA combines acetate with ATP to form acetyl-adenylate (AcAMP) intermediate. In the second half reaction, it can then transfer the acetyl group from AcAMP to the sulfhydryl group of CoA, forming the product AcCoA. The polypeptide is Acetyl-coenzyme A synthetase (Paraburkholderia phymatum (strain DSM 17167 / CIP 108236 / LMG 21445 / STM815) (Burkholderia phymatum)).